The following is a 372-amino-acid chain: 4-hydroxy-3-methylbut-2-en-1-yl diphosphate synthase (flavodoxin) (372 aa).

The [4Fe-4S] cluster site is built by Cys-270, Cys-273, Cys-305, and Glu-312.

This sequence belongs to the IspG family. [4Fe-4S] cluster serves as cofactor.

The catalysed reaction is (2E)-4-hydroxy-3-methylbut-2-enyl diphosphate + oxidized [flavodoxin] + H2O + 2 H(+) = 2-C-methyl-D-erythritol 2,4-cyclic diphosphate + reduced [flavodoxin]. It functions in the pathway isoprenoid biosynthesis; isopentenyl diphosphate biosynthesis via DXP pathway; isopentenyl diphosphate from 1-deoxy-D-xylulose 5-phosphate: step 5/6. In terms of biological role, converts 2C-methyl-D-erythritol 2,4-cyclodiphosphate (ME-2,4cPP) into 1-hydroxy-2-methyl-2-(E)-butenyl 4-diphosphate. This is 4-hydroxy-3-methylbut-2-en-1-yl diphosphate synthase (flavodoxin) from Cronobacter sakazakii (strain ATCC BAA-894) (Enterobacter sakazakii).